The primary structure comprises 138 residues: Large ribosomal subunit protein uL16 (138 aa).

This sequence belongs to the universal ribosomal protein uL16 family. As to quaternary structure, part of the 50S ribosomal subunit.

Its function is as follows. Binds 23S rRNA and is also seen to make contacts with the A and possibly P site tRNAs. The sequence is that of Large ribosomal subunit protein uL16 from Chlamydia caviae (strain ATCC VR-813 / DSM 19441 / 03DC25 / GPIC) (Chlamydophila caviae).